The following is a 354-amino-acid chain: Methylthioribose-1-phosphate isomerase (354 aa).

Substrate is bound by residues 48-50 (RGA), arginine 95, and glutamine 202. The Proton donor role is filled by aspartate 243. 253–254 (NK) contacts substrate.

This sequence belongs to the eIF-2B alpha/beta/delta subunits family. MtnA subfamily.

It catalyses the reaction 5-(methylsulfanyl)-alpha-D-ribose 1-phosphate = 5-(methylsulfanyl)-D-ribulose 1-phosphate. It functions in the pathway amino-acid biosynthesis; L-methionine biosynthesis via salvage pathway; L-methionine from S-methyl-5-thio-alpha-D-ribose 1-phosphate: step 1/6. Catalyzes the interconversion of methylthioribose-1-phosphate (MTR-1-P) into methylthioribulose-1-phosphate (MTRu-1-P). The sequence is that of Methylthioribose-1-phosphate isomerase from Roseiflexus castenholzii (strain DSM 13941 / HLO8).